Consider the following 603-residue polypeptide: MFSKSEFREVVKSMGLVFGDIGTSPIYTLTVIFLLTRPTHTHIIGVLSLIIWTLIILVTVEYAWLAMSLGKKGEGGTIVLKEILVPLLKSSRNVAFVTLLAYIGTSFLMGDGVITPAISILSAVEGLRIIPQFENIGQSTIILISAAIAIALFSVQSKGIEKITWVFGPIMVLWFATIGFSGIASIFYTPEVLKAINPYYAIRFLLDNGIIGFFVLSEVILCATGGEALYADMGHLGREPILKAWRFVFLALVLNYLGQGAFLIRNPGSTNFLFEMINQQANILYIPFLLLSVVATIIASQAMISGMFSIVYQGITTRIIPMLKIDYTSGVFKSQIYISTVNWLLLVSVLFMMLIFKESSKLAAAYGLAVTGTMSITGIMMTSIFYHRKNITKALISLFITFIDVVFLLSNSYKIPHGGYWSVIIALFILSLILIYTSGQKKLYKLMKLMKSKDFLEKYKQVYATQNKIMGTALFFTRDIERIPQYISHVMFKNNIIYENNIFISIIKSDSPFGIETSFTKEPAKGLKILEIRAGYMEIVNVEKILKDQGIGEKTIFYGVEDIFTKNIIWRIFSIIKKVSPSFVQFYKLPTDELHGVMTRFEM.

12 helical membrane passes run 15-35, 43-63, 94-114, 135-155, 163-183, 209-229, 244-264, 283-303, 336-356, 365-385, 390-410, and 415-435; these read GLVFGDIGTSPIYTLTVIFLL, IIGVLSLIIWTLIILVTVEYA, VAFVTLLAYIGTSFLMGDGVI, NIGQSTIILISAAIAIALFSV, ITWVFGPIMVLWFATIGFSGI, GIIGFFVLSEVILCATGGEAL, AWRFVFLALVLNYLGQGAFLI, ILYIPFLLLSVVATIIASQAM, IYISTVNWLLLVSVLFMMLIF, AYGLAVTGTMSITGIMMTSIF, NITKALISLFITFIDVVFLLS, and IPHGGYWSVIIALFILSLILI.

Belongs to the HAK/KUP transporter (TC 2.A.72) family.

Its subcellular location is the cell membrane. It catalyses the reaction K(+)(in) + H(+)(in) = K(+)(out) + H(+)(out). In terms of biological role, transport of potassium into the cell. Likely operates as a K(+):H(+) symporter. This chain is Probable potassium transport system protein Kup, found in Methanosarcina barkeri (strain Fusaro / DSM 804).